Reading from the N-terminus, the 160-residue chain is CST complex subunit STN1 (160 aa).

Positions 41–133 (VEIVGTIVSR…QITANVAVAE (93 aa)) form a DNA-binding region, OB.

It belongs to the STN1 family. In terms of assembly, component of the CST complex, composed of CTC1, TEN1 and STN1. Interacts with CTC1. Interacts with TEN1. Interacts with POT1A. In vitro interaction with TEN1 and POT1A is mutually exclusive, indicating that POT1A and TEN1 may compete for the same binding site. In terms of tissue distribution, widely expressed.

It is found in the nucleus. Its subcellular location is the chromosome. It localises to the telomere. In terms of biological role, component of the CST complex, a complex that binds to single-stranded DNA and is required to protect telomeres from DNA degradation. The CST complex binds single-stranded DNA with high affinity in a sequence-independent manner, while isolated subunits bind DNA with low affinity by themselves. Associates with enzymatically active telomerase. Plays a genomewide role in DNA replication and facilitates re-replication at non-telomeric loci. The sequence is that of CST complex subunit STN1 from Arabidopsis thaliana (Mouse-ear cress).